The primary structure comprises 596 residues: Aspartate--tRNA(Asp/Asn) ligase (596 aa).

Residue E175 participates in L-aspartate binding. Residues 199-202 (QMFK) form an aspartate region. Residues R221 and H451 each coordinate L-aspartate. 221-223 (RDE) is an ATP binding site. Residue E485 participates in ATP binding. R492 contacts L-aspartate. Residue 537–540 (GVDR) coordinates ATP.

It belongs to the class-II aminoacyl-tRNA synthetase family. Type 1 subfamily. In terms of assembly, homodimer.

The protein localises to the cytoplasm. The enzyme catalyses tRNA(Asx) + L-aspartate + ATP = L-aspartyl-tRNA(Asx) + AMP + diphosphate. Its function is as follows. Aspartyl-tRNA synthetase with relaxed tRNA specificity since it is able to aspartylate not only its cognate tRNA(Asp) but also tRNA(Asn). Reaction proceeds in two steps: L-aspartate is first activated by ATP to form Asp-AMP and then transferred to the acceptor end of tRNA(Asp/Asn). The chain is Aspartate--tRNA(Asp/Asn) ligase from Zymomonas mobilis subsp. mobilis (strain ATCC 31821 / ZM4 / CP4).